The chain runs to 700 residues: Polyribonucleotide nucleotidyltransferase (700 aa).

Mg(2+) contacts are provided by aspartate 491 and aspartate 497. A KH domain is found at 558 to 617 (PNYAVIEINPDKIRDVIGKGGATIRQLTEETGAVIDIDDAGTIRIFGENKAATKAAIAKI). The region spanning 627-695 (GKTYEGTVAR…NRGRIKLTMK (69 aa)) is the S1 motif domain.

It belongs to the polyribonucleotide nucleotidyltransferase family. As to quaternary structure, component of the RNA degradosome, which is a multiprotein complex involved in RNA processing and mRNA degradation. Mg(2+) is required as a cofactor.

Its subcellular location is the cytoplasm. The enzyme catalyses RNA(n+1) + phosphate = RNA(n) + a ribonucleoside 5'-diphosphate. Functionally, involved in mRNA degradation. Catalyzes the phosphorolysis of single-stranded polyribonucleotides processively in the 3'- to 5'-direction. This chain is Polyribonucleotide nucleotidyltransferase, found in Psychrobacter arcticus (strain DSM 17307 / VKM B-2377 / 273-4).